Reading from the N-terminus, the 589-residue chain is Glutamine--fructose-6-phosphate aminotransferase [isomerizing] (589 aa).

Cys2 (nucleophile; for GATase activity) is an active-site residue. One can recognise a Glutamine amidotransferase type-2 domain in the interval 2–221 (CGIIGIVSLR…DDELGFITPE (220 aa)). SIS domains lie at 286 to 426 (VIEE…KMEK) and 445 to 579 (IGEE…PDKP). The active-site For Fru-6P isomerization activity is Lys584.

In terms of assembly, homodimer.

Its subcellular location is the cytoplasm. It carries out the reaction D-fructose 6-phosphate + L-glutamine = D-glucosamine 6-phosphate + L-glutamate. Catalyzes the first step in hexosamine metabolism, converting fructose-6P into glucosamine-6P using glutamine as a nitrogen source. The protein is Glutamine--fructose-6-phosphate aminotransferase [isomerizing] of Sulfurisphaera tokodaii (strain DSM 16993 / JCM 10545 / NBRC 100140 / 7) (Sulfolobus tokodaii).